The following is a 503-amino-acid chain: Cytochrome P450 3A8 (503 aa).

Cysteine 442 is a binding site for heme.

It belongs to the cytochrome P450 family. Heme serves as cofactor.

It localises to the endoplasmic reticulum membrane. The protein resides in the microsome membrane. It catalyses the reaction an organic molecule + reduced [NADPH--hemoprotein reductase] + O2 = an alcohol + oxidized [NADPH--hemoprotein reductase] + H2O + H(+). In terms of biological role, catalyzes nifedipine and nilvadipine oxidations. In Macaca fascicularis (Crab-eating macaque), this protein is Cytochrome P450 3A8 (CYP3A8).